The chain runs to 177 residues: Protein Abitram (177 aa).

This sequence belongs to the ABITRAM family.

The protein resides in the nucleus speckle. It is found in the cell projection. The protein localises to the lamellipodium. It localises to the nucleus. Its subcellular location is the growth cone. The protein resides in the dendrite. Its function is as follows. May regulate actin polymerization, filopodia dynamics and arborization of neurons. The sequence is that of Protein Abitram (abitram) from Danio rerio (Zebrafish).